A 286-amino-acid polypeptide reads, in one-letter code: ATP synthase gamma chain (286 aa).

It belongs to the ATPase gamma chain family. As to quaternary structure, F-type ATPases have 2 components, CF(1) - the catalytic core - and CF(0) - the membrane proton channel. CF(1) has five subunits: alpha(3), beta(3), gamma(1), delta(1), epsilon(1). CF(0) has three main subunits: a, b and c.

The protein resides in the cell inner membrane. Functionally, produces ATP from ADP in the presence of a proton gradient across the membrane. The gamma chain is believed to be important in regulating ATPase activity and the flow of protons through the CF(0) complex. This Pseudomonas putida (strain ATCC 700007 / DSM 6899 / JCM 31910 / BCRC 17059 / LMG 24140 / F1) protein is ATP synthase gamma chain.